An 83-amino-acid chain; its full sequence is UPF0297 protein CKR_1221 (83 aa).

This sequence belongs to the UPF0297 family.

The polypeptide is UPF0297 protein CKR_1221 (Clostridium kluyveri (strain NBRC 12016)).